The sequence spans 278 residues: Undecaprenyl-diphosphatase 1 (278 aa).

Transmembrane regions (helical) follow at residues 1 to 21 (MFFG…TEFL), 43 to 63 (AFTT…VVLL), 83 to 103 (IWAT…IGFL), 112 to 132 (LMNW…FIFI), 192 to 212 (FSFF…IGSY), 224 to 244 (IVIL…VIKW), and 257 to 277 (FGWY…IGII).

The protein belongs to the UppP family.

It localises to the cell membrane. It catalyses the reaction di-trans,octa-cis-undecaprenyl diphosphate + H2O = di-trans,octa-cis-undecaprenyl phosphate + phosphate + H(+). Catalyzes the dephosphorylation of undecaprenyl diphosphate (UPP). Confers resistance to bacitracin. The protein is Undecaprenyl-diphosphatase 1 of Oenococcus oeni (strain ATCC BAA-331 / PSU-1).